The chain runs to 420 residues: Probable protein phosphatase 2C 76 (420 aa).

The region spanning 101-347 (SCGYCSFRGK…DNITCIVVKF (247 aa)) is the PPM-type phosphatase domain. D137, G138, D299, and D338 together coordinate Mn(2+). The interval 353-420 (ESPKIETNAM…PETKGEKAGE (68 aa)) is disordered. The span at 403-420 (PDPKPETEPETKGEKAGE) shows a compositional bias: basic and acidic residues.

This sequence belongs to the PP2C family. It depends on Mg(2+) as a cofactor. Requires Mn(2+) as cofactor.

The enzyme catalyses O-phospho-L-seryl-[protein] + H2O = L-seryl-[protein] + phosphate. It catalyses the reaction O-phospho-L-threonyl-[protein] + H2O = L-threonyl-[protein] + phosphate. In Arabidopsis thaliana (Mouse-ear cress), this protein is Probable protein phosphatase 2C 76.